The chain runs to 133 residues: Heat shock protein 15 (133 aa).

One can recognise an S4 RNA-binding domain in the interval 9–71 (VRLDKWLWAA…DERTVIVKAI (63 aa)). The tract at residues 105-133 (NALTMPHPDRRPDKKERRDLLRFKHGDSE) is disordered. A compositionally biased stretch (basic and acidic residues) spans 111 to 133 (HPDRRPDKKERRDLLRFKHGDSE).

The protein belongs to the HSP15 family. Monomer.

In terms of biological role, involved in the recycling of free 50S ribosomal subunits that still carry a nascent chain. Binds RNA more specifically than DNA. Binds with very high affinity to the free 50S ribosomal subunit. Does not bind it when it is part of the 70S ribosome. The protein is Heat shock protein 15 (hslR) of Escherichia coli O157:H7.